The following is a 411-amino-acid chain: Meiotic driver wtf33 (411 aa).

The segment at 1 to 95 (MKNKYYPLRS…ENHSSGTADN (95 aa)) is disordered. Residues 11 to 29 (SMDELSTKNDNEIDLEKGP) show a composition bias toward basic and acidic residues. The segment covering 57–72 (GANNPNLFNTDESTTP) has biased composition (polar residues). Transmembrane regions (helical) follow at residues 104 to 124 (AILS…YLTY), 137 to 157 (WVYF…LWCF), 244 to 264 (EMMI…FGCV), 281 to 301 (TISA…WTLW), 303 to 323 (ALSG…LVNG), and 336 to 356 (GYEI…LYEM).

The protein belongs to the WTF family. In terms of assembly, homomer. Forms protein aggregates. The two isoforms can interact with each other and with themselves. High sequence similarity is required for their interaction.

The protein resides in the spore membrane. The protein localises to the vacuole membrane. It localises to the ascus epiplasm. Its subcellular location is the cytoplasm. It is found in the endoplasmic reticulum membrane. In terms of biological role, promotes unequal transmission of alleles from the parental zygote to progeny spores by acting as poison/antidote system where the poison and antidote proteins are produced from the same locus; the poison component is trans-acting and targets all spores within an ascus whereas the antidote component is spore-specific, leading to poisoning of all progeny that do not inherit the allele. Its function is as follows. Localizes isoform 2 to the vacuole thereby facilitating its degradation. Functionally, forms toxic aggregates that disrupt spore maturation. The protein is Meiotic driver wtf33 of Schizosaccharomyces kambucha (Fission yeast).